The sequence spans 229 residues: Uracil-DNA glycosylase (229 aa).

The active-site Proton acceptor is Asp-67.

Belongs to the uracil-DNA glycosylase (UDG) superfamily. UNG family.

Its subcellular location is the cytoplasm. The catalysed reaction is Hydrolyzes single-stranded DNA or mismatched double-stranded DNA and polynucleotides, releasing free uracil.. In terms of biological role, excises uracil residues from the DNA which can arise as a result of misincorporation of dUMP residues by DNA polymerase or due to deamination of cytosine. In Coxiella burnetii (strain CbuG_Q212) (Coxiella burnetii (strain Q212)), this protein is Uracil-DNA glycosylase.